A 700-amino-acid chain; its full sequence is Elongation factor G 2 (700 aa).

One can recognise a tr-type G domain in the interval 8-290; sequence ERYRNIGISA…AVIDFLPSPV (283 aa). Residues 17 to 24, 88 to 92, and 142 to 145 contribute to the GTP site; these read AHIDAGKT, DTPGH, and NKMD.

It belongs to the TRAFAC class translation factor GTPase superfamily. Classic translation factor GTPase family. EF-G/EF-2 subfamily.

It localises to the cytoplasm. Functionally, catalyzes the GTP-dependent ribosomal translocation step during translation elongation. During this step, the ribosome changes from the pre-translocational (PRE) to the post-translocational (POST) state as the newly formed A-site-bound peptidyl-tRNA and P-site-bound deacylated tRNA move to the P and E sites, respectively. Catalyzes the coordinated movement of the two tRNA molecules, the mRNA and conformational changes in the ribosome. This Burkholderia orbicola (strain AU 1054) protein is Elongation factor G 2.